Reading from the N-terminus, the 495-residue chain is MSEEMNDQMLVRRQKLQELYDLGIDPFGSKFDRSGLSSDLKEEWDQYSKEELVEKEADSHVAIAGRLMTKRGKGKAGFAHVQDLAGQIQIYVRKDQVGDDEFDLWKNADLGDIVGVEGVMFKTNTGELSVKAKKFTLLTKSLRPLPDKFHGLQDIEQRYRQRYLDLITNEDSTRTFINRSKIIQEMRNYLNNKGFLEVETPMMHQIAGGAAARPFVTHHNALDATLYMRIAIELHLKRLIVGGLEKVYEIGRVFRNEGVSTRHNPEFTMIELYEAYADYHDIMDLTESMVRHIANEVLGSAKVQYNGETIDLESAWTRLHIVDAVKEATGVDFYEVKSDEERKALAKEHGIEIKDTMKYGHILNEFFEQKVEETLIQPTFIYGHPTEISPLAKKNPEDPRFTDRFELFIVGREHANRFTELNDPIDQKGRFEAQLVEKAQGNDEAHEMDEDYIEALEYGMPPTGGLGIGIDRLVMLLTDSPSIRDVLLFPYMRQK.

Mg(2+) contacts are provided by E406 and E413.

Belongs to the class-II aminoacyl-tRNA synthetase family. As to quaternary structure, homodimer. Mg(2+) is required as a cofactor.

Its subcellular location is the cytoplasm. It carries out the reaction tRNA(Lys) + L-lysine + ATP = L-lysyl-tRNA(Lys) + AMP + diphosphate. The sequence is that of Lysine--tRNA ligase (lysS) from Staphylococcus aureus.